The following is a 258-amino-acid chain: tRNA pseudouridine synthase A (258 aa).

The active-site Nucleophile is aspartate 52. Tyrosine 110 lines the substrate pocket.

Belongs to the tRNA pseudouridine synthase TruA family. In terms of assembly, homodimer.

It carries out the reaction uridine(38/39/40) in tRNA = pseudouridine(38/39/40) in tRNA. Functionally, formation of pseudouridine at positions 38, 39 and 40 in the anticodon stem and loop of transfer RNAs. The sequence is that of tRNA pseudouridine synthase A from Francisella philomiragia subsp. philomiragia (strain ATCC 25017 / CCUG 19701 / FSC 153 / O#319-036).